Reading from the N-terminus, the 269-residue chain is Mitochondrial scaffolding protein 1 (269 aa).

The PDZ domain occupies 49–121; it reads VVEIEKTSKG…HDEAVEVFRS (73 aa). The interval 143-185 is disordered; that stretch reads RTQTPTASVSITPQVTPQTRSTQNNTDTPKSMSHSESKSRLTS. Residues 145–174 show a composition bias toward polar residues; the sequence is QTPTASVSITPQVTPQTRSTQNNTDTPKSM. A helical transmembrane segment spans residues 240–262; the sequence is WLTEALYVSIGLGALTISGYLAY.

It is found in the membrane. Its function is as follows. Plays a role in the regulation of lifespan in a partially daf-16-mediated manner, and may be involved in regulating the levels of reactive oxygen species production in response to heat stress. This Caenorhabditis elegans protein is Mitochondrial scaffolding protein 1.